The chain runs to 463 residues: mRNA-capping enzyme subunit alpha (463 aa).

The active-site N6-GMP-lysine intermediate is the Lys66. Residues 404–463 (WEERKSKKRTHSSISGPMLPPVAETKAPREATQSRYIDDEDWSDEADDDDEDSLKRARIE) are disordered. Over residues 441–455 (DDEDWSDEADDDDED) the composition is skewed to acidic residues.

Belongs to the eukaryotic GTase family. In terms of assembly, heterodimer. The mRNA-capping enzyme is composed of two separate chains alpha and beta, respectively a mRNA guanylyltransferase and an mRNA 5'-triphosphate monophosphatase.

The protein resides in the nucleus. The catalysed reaction is a 5'-end diphospho-ribonucleoside in mRNA + GTP + H(+) = a 5'-end (5'-triphosphoguanosine)-ribonucleoside in mRNA + diphosphate. Its function is as follows. Second step of mRNA capping. Transfer of the GMP moiety of GTP to the 5'-end of RNA via an enzyme-GMP covalent reaction intermediate. In Eremothecium gossypii (strain ATCC 10895 / CBS 109.51 / FGSC 9923 / NRRL Y-1056) (Yeast), this protein is mRNA-capping enzyme subunit alpha (CEG1).